Reading from the N-terminus, the 645-residue chain is Acetyl-coenzyme A synthetase 2 (645 aa).

Residues 190-193 (RGGK), Thr308, and Asn332 each bind CoA. Residues 384–386 (GEP), 408–413 (DTWWQT), Asp497, and Arg512 contribute to the ATP site. Ser520 contributes to the CoA binding site. Arg523 is a binding site for ATP. Residues Val534, His536, and Val539 each contribute to the Mg(2+) site. Lys606 is subject to N6-acetyllysine.

It belongs to the ATP-dependent AMP-binding enzyme family. Mg(2+) serves as cofactor. Acetylated. Deacetylation by the SIR2-homolog deacetylase activates the enzyme.

It catalyses the reaction acetate + ATP + CoA = acetyl-CoA + AMP + diphosphate. Catalyzes the conversion of acetate into acetyl-CoA (AcCoA), an essential intermediate at the junction of anabolic and catabolic pathways. AcsA undergoes a two-step reaction. In the first half reaction, AcsA combines acetate with ATP to form acetyl-adenylate (AcAMP) intermediate. In the second half reaction, it can then transfer the acetyl group from AcAMP to the sulfhydryl group of CoA, forming the product AcCoA. This Pseudomonas aeruginosa (strain ATCC 15692 / DSM 22644 / CIP 104116 / JCM 14847 / LMG 12228 / 1C / PRS 101 / PAO1) protein is Acetyl-coenzyme A synthetase 2.